A 175-amino-acid chain; its full sequence is Alkyl hydroperoxide reductase AhpD (175 aa).

The Proton donor role is filled by cysteine 131. A disulfide bridge links cysteine 131 with cysteine 134. The active-site Cysteine sulfenic acid (-SOH) intermediate is the cysteine 134.

The protein belongs to the AhpD family.

The enzyme catalyses N(6)-[(R)-dihydrolipoyl]-L-lysyl-[lipoyl-carrier protein] + a hydroperoxide = N(6)-[(R)-lipoyl]-L-lysyl-[lipoyl-carrier protein] + an alcohol + H2O. Antioxidant protein with alkyl hydroperoxidase activity. Required for the reduction of the AhpC active site cysteine residues and for the regeneration of the AhpC enzyme activity. In Brucella anthropi (strain ATCC 49188 / DSM 6882 / CCUG 24695 / JCM 21032 / LMG 3331 / NBRC 15819 / NCTC 12168 / Alc 37) (Ochrobactrum anthropi), this protein is Alkyl hydroperoxide reductase AhpD.